Consider the following 1006-residue polypeptide: Unconventional myosin-Id (1006 aa).

At Ala2 the chain carries N-acetylalanine. Positions Phe9–Ala695 constitute a Myosin motor domain. Gly102–Thr109 is an ATP binding site. Ser200 carries the phosphoserine modification. At Tyr536 the chain carries Phosphotyrosine. The tract at residues Met572–Asp594 is actin-binding. IQ domains follow at residues Ile699–Lys719 and Thr721–His741. Positions Gly812–Gly1005 constitute a TH1 domain.

It belongs to the TRAFAC class myosin-kinesin ATPase superfamily. Myosin family. In terms of assembly, interacts (via the two IQ motifs) with calmodulin. Binds an additional calmodulin chain via a third, C-terminal region. Interacts with F-actin. Expressed in many tissues. Highest levels in brain, followed by lung and ovary; expression is lowest in spleen.

It is found in the cytoplasm. It localises to the perikaryon. Its subcellular location is the cell projection. The protein localises to the dendrite. The protein resides in the early endosome. It is found in the cell cortex. Unconventional myosin that functions as actin-based motor protein with ATPase activity. Plays a role in endosomal protein trafficking, and especially in the transfer of cargo proteins from early to recycling endosomes. Required for normal planar cell polarity in ciliated tracheal cells, for normal rotational polarity of cilia, and for coordinated, unidirectional ciliary movement in the trachea. Required for normal, polarized cilia organization in brain ependymal epithelial cells. The protein is Unconventional myosin-Id (MYO1D) of Homo sapiens (Human).